The sequence spans 179 residues: MKEKIISEINLDLVFQCNDFSQFSNKLKDSKTKLIFESIFWEKVFLSWINTILKKEDYELPYYIFEKKSFSLGLQIISNQEIASLNKKWMQKNGPTDVLSFPIISDESLNNLDQIELGDIFISLEMALEQSYEYKHSIYREMIWLASHGFLHLLGWEHNNEHDLENMLNFQEYLITRLN.

Positions 148, 152, and 158 each coordinate Zn(2+).

It belongs to the endoribonuclease YbeY family. The cofactor is Zn(2+).

It localises to the cytoplasm. Functionally, single strand-specific metallo-endoribonuclease involved in late-stage 70S ribosome quality control and in maturation of the 3' terminus of the 16S rRNA. This chain is Endoribonuclease YbeY, found in Prochlorococcus marinus (strain MIT 9312).